A 284-amino-acid polypeptide reads, in one-letter code: 2,3,4,5-tetrahydropyridine-2,6-dicarboxylate N-succinyltransferase (284 aa).

Substrate is bound by residues Arg111 and Asp148.

The protein belongs to the transferase hexapeptide repeat family. In terms of assembly, homotrimer.

The protein localises to the cytoplasm. The catalysed reaction is (S)-2,3,4,5-tetrahydrodipicolinate + succinyl-CoA + H2O = (S)-2-succinylamino-6-oxoheptanedioate + CoA. It participates in amino-acid biosynthesis; L-lysine biosynthesis via DAP pathway; LL-2,6-diaminopimelate from (S)-tetrahydrodipicolinate (succinylase route): step 1/3. The chain is 2,3,4,5-tetrahydropyridine-2,6-dicarboxylate N-succinyltransferase from Ehrlichia ruminantium (strain Gardel).